The chain runs to 228 residues: Sugar fermentation stimulation protein homolog (228 aa).

The protein belongs to the SfsA family.

This chain is Sugar fermentation stimulation protein homolog, found in Desulfitobacterium hafniense (strain Y51).